The sequence spans 313 residues: 3'-5' exoribonuclease YhaM (313 aa).

The OB DNA-binding region spans 22–90 (SSVKGTASNG…QLKIRQIRQA (69 aa)). One can recognise an HD domain in the interval 163 to 279 (HVVSMLRLAK…LHQIDLMDAS (117 aa)).

This sequence belongs to the YhaM family.

Functionally, shows a 3'-5' exoribonuclease activity. This chain is 3'-5' exoribonuclease YhaM, found in Listeria monocytogenes serovar 1/2a (strain ATCC BAA-679 / EGD-e).